Here is a 702-residue protein sequence, read N- to C-terminus: MADS-box MEF2 type transcription factor MIG1 (702 aa).

One can recognise an MADS-box domain in the interval 1-61 (MGRRKIEIKA…KKLYEYSSGD (61 aa)). Disordered stretches follow at residues 73-608 (GGAT…NIDT) and 658-702 (PSFL…KVDS). Residues 86–96 (GGDDDDEEEGD) are compositionally biased toward acidic residues. Pro residues predominate over residues 132–144 (ASPPIPNGVPFPP). The span at 145 to 155 (HGHGVPRGHTP) shows a compositional bias: low complexity. Positions 180-195 (GSPQVNGFGFGQQQSM) are enriched in polar residues. Pro residues predominate over residues 201 to 241 (TTMPPHMPPQMAPGPPFPYPQHPQHPPHPPHPPHPPHPQQP). Composition is skewed to low complexity over residues 273–284 (PMGMQRHSVSPP), 326–343 (ESPQ…QQPE), and 350–371 (EQQQ…QSEP). Polar residues predominate over residues 456-465 (VDESTSNASE). Low complexity-rich tracts occupy residues 487-512 (RASI…SLRA) and 530-553 (DGSG…DATS). Residues 554–567 (QSTRQNDSHSSTNM) show a composition bias toward polar residues. A compositionally biased stretch (pro residues) spans 587 to 600 (PPNPFAPKRPPQHP). Residues 693–702 (NEPKRVKVDS) are compositionally biased toward basic and acidic residues.

This sequence belongs to the MEF2 family. In terms of assembly, interacts with MAPK MPS1.

Its subcellular location is the nucleus. Its function is as follows. Transcription factor acting downstream of the MPS1 MAP kinase (MAPK) cascade during conidiation and plant infection. Required for overcoming plant defense responses and the differentiation of secondary infectious hyphae in live plant cells. This is MADS-box MEF2 type transcription factor MIG1 from Pyricularia oryzae (Rice blast fungus).